The following is a 473-amino-acid chain: Nitrogenase vanadium-iron protein alpha chain (473 aa).

C49, C74, and C137 together coordinate [8Fe-7S] cluster. 2 residues coordinate [7Fe-V-9S-C-homocitryl] cluster: C256 and H422.

This sequence belongs to the NifD/NifK/NifE/NifN family. Hexamer of two alpha, two beta, and two delta chains. The cofactor is [8Fe-7S] cluster. It depends on [7Fe-V-9S-C-homocitryl] cluster as a cofactor.

It carries out the reaction N2 + 8 reduced [2Fe-2S]-[ferredoxin] + 16 ATP + 16 H2O = H2 + 8 oxidized [2Fe-2S]-[ferredoxin] + 2 NH4(+) + 16 ADP + 16 phosphate + 6 H(+). Functionally, this vanadium-iron protein is part of the nitrogenase complex that catalyzes the key enzymatic reactions in nitrogen fixation. The protein is Nitrogenase vanadium-iron protein alpha chain (vnfD) of Azotobacter chroococcum mcd 1.